We begin with the raw amino-acid sequence, 263 residues long: MAQATVTVDGVKVTSTRPQSAQISIHIHHKSALEQLLGAMGSLKKFLSYPQARIHYGQLSLGVTQILLGLVSCVLGVCLYFGPWTELCASGCAFWSGSVAILAGVGIVIHEMGQGKLSGHISRLLLLACSATAAAATVMGVKSLIWQTSASYYFEISSTCDSLQPSIVDRFRSVRFTDDSDWRTERCREYLRMMMNLFLAFCILFTVICILKIVVSVASLGLSLRSMCGRNSQVLNDEETEKKLLGGDSAPASPTKEKIPVTP.

Transmembrane regions (helical) follow at residues L61 to F81, A89 to I109, L125 to I145, and L197 to V217. The interval K242–P263 is disordered. A phosphoserine mark is found at S249 and S253.

The protein belongs to the TMEM176 family. Expressed in spleen by a variety of myeloid cells including macrophages and dendritic cells (at protein level). Ubiquitously expressed with higher expression in lymphoid tissues.

Its subcellular location is the nucleus membrane. Functionally, required for the development of cerebellar granule cells. May play a role in the process of maturation of dendritic cells. This Rattus norvegicus (Rat) protein is Transmembrane protein 176B (Tmem176b).